The sequence spans 961 residues: Endochitinase A (961 aa).

A signal peptide spans 1–21; the sequence is MAPKLFTFVSALSGLASLASA. The region spanning 28-339 is the GH18 domain; the sequence is SNIAVYYGQG…EKIREILYDL (312 aa). Glutamate 175 functions as the Proton donor in the catalytic mechanism. 4 disordered regions span residues 338–720, 767–787, 813–842, and 912–933; these read DLDP…TTTE, TDVP…TADI, PPAT…GEVS, and HVPV…ASPT. Positions 342 to 355 are enriched in pro residues; the sequence is NHPPPTTSPTPTPT. Composition is skewed to low complexity over residues 356-510, 519-544, 552-604, and 612-635; these read PSTT…STSS, SSTS…PVIS, TSSS…PETT, and TPGS…PATS. The span at 636–665 shows a compositional bias: polar residues; sequence GGHTETSTVSTSSANQTPSASTSKPLIPTN. Residues 666-720 show a composition bias toward low complexity; it reads SASSTSTGSVTSTPSAPGVPSSSAGSDETATTSTTDSEPTSTSSGSVTAKPTTTE. The GPI-anchor amidated glycine moiety is linked to residue glycine 936. Residues 937–961 constitute a propeptide, removed in mature form; the sequence is AGSRYDVVKGVPALVALALSLLAVL.

This sequence belongs to the glycosyl hydrolase 18 family. Chitinase class III subfamily. Post-translationally, O-glycosylated but not N-glycosylated.

The protein resides in the cell membrane. The protein localises to the secreted. It localises to the cell wall. It is found in the cell tip. It carries out the reaction Random endo-hydrolysis of N-acetyl-beta-D-glucosaminide (1-&gt;4)-beta-linkages in chitin and chitodextrins.. Its function is as follows. GPI-anchored chitinase involved in the degradation of chitin, a component of the cell walls of fungi and exoskeletal elements of some animals (including worms and arthropods). Required to reshape the cell wall at the sites where cell wall remodeling and/or cell wall maturation actively take place such as sites of conidia formation. This chain is Endochitinase A (chiA), found in Emericella nidulans (Aspergillus nidulans).